The sequence spans 211 residues: Transcription factor E (211 aa).

The 121-residue stretch at 10–130 (GNPAIYQYLL…LWLMRMDHMN (121 aa)) folds into the HTH TFE/IIEalpha-type domain.

Belongs to the TFE family. Monomer. Interaction with RNA polymerase subunits RpoF and RpoE is necessary for Tfe stimulatory transcription activity. Able to interact with Tbp and RNA polymerase in the absence of DNA promoter. Interacts both with the preinitiation and elongation complexes.

In terms of biological role, transcription factor that plays a role in the activation of archaeal genes transcribed by RNA polymerase. Facilitates transcription initiation by enhancing TATA-box recognition by TATA-box-binding protein (Tbp), and transcription factor B (Tfb) and RNA polymerase recruitment. Not absolutely required for transcription in vitro, but particularly important in cases where Tbp or Tfb function is not optimal. It dynamically alters the nucleic acid-binding properties of RNA polymerases by stabilizing the initiation complex and destabilizing elongation complexes. Seems to translocate with the RNA polymerase following initiation and acts by binding to the non template strand of the transcription bubble in elongation complexes. The polypeptide is Transcription factor E (Methanocorpusculum labreanum (strain ATCC 43576 / DSM 4855 / Z)).